A 310-amino-acid chain; its full sequence is Vomeronasal type-1 receptor 101 (310 aa).

The Extracellular segment spans residues 1–19; it reads MNKVNILPSDTNMKITLFS. The chain crosses the membrane as a helical span at residues 20 to 40; that stretch reads ELSVGISANSILFFAHLCMFF. The Cytoplasmic segment spans residues 41–49; the sequence is EENRSKPID. A helical membrane pass occupies residues 50-70; that stretch reads LCIAFLSLTQLMLLVTMGLIA. Over 71–93 the chain is Extracellular; that stretch reads ADMFMAQGIWDITTCRSLIYFHR. Cysteines 85 and 172 form a disulfide. Residues 94-114 form a helical membrane-spanning segment; that stretch reads LLRGFNLCAACLLHILWTFTL. At 115–134 the chain is on the cytoplasmic side; sequence SPRSSCLTKFKHKSPHHISG. Residues 135–155 traverse the membrane as a helical segment; that stretch reads AYLFFCVLYMSFSSHLFVLVI. The Extracellular segment spans residues 156 to 193; the sequence is ATSNLTSDHFMYVTQSCSLLPMSYSRTSTFSLLMVTRE. A glycan (N-linked (GlcNAc...) asparagine) is linked at N159. The helical transmembrane segment at 194–214 threads the bilayer; that stretch reads VFLISLMALSSGYMVTLLWRH. Residues 215-238 lie on the Cytoplasmic side of the membrane; the sequence is KKQAQHLHSTRLSSKASPQQRATR. Residues 239 to 259 traverse the membrane as a helical segment; it reads TILLLMTFFVVFYILGTVIFH. Over 260–268 the chain is Extracellular; the sequence is SRTKFKDGS. A helical transmembrane segment spans residues 269–289; sequence IFYCVQIIVSHSYATISPFVF. Residues 290–310 lie on the Cytoplasmic side of the membrane; sequence VFSEKRIIKFFRSMCGRIVNT.

This sequence belongs to the G-protein coupled receptor 1 family. In terms of tissue distribution, expressed in 1-4% of neurons of the vomeronasal organ. Only one pheromone receptor gene may be expressed in a particular neuron. Not expressed in the main olfactory epithelium.

It is found in the cell membrane. Putative pheromone receptor implicated in the regulation of social as well as reproductive behavior. This chain is Vomeronasal type-1 receptor 101 (Vom1r101), found in Rattus norvegicus (Rat).